The sequence spans 199 residues: ATP-dependent Clp protease proteolytic subunit 3 (199 aa).

The Nucleophile role is filled by Ser101. His126 is an active-site residue.

It belongs to the peptidase S14 family. As to quaternary structure, fourteen ClpP subunits assemble into 2 heptameric rings which stack back to back to give a disk-like structure with a central cavity, resembling the structure of eukaryotic proteasomes.

It localises to the cytoplasm. It carries out the reaction Hydrolysis of proteins to small peptides in the presence of ATP and magnesium. alpha-casein is the usual test substrate. In the absence of ATP, only oligopeptides shorter than five residues are hydrolyzed (such as succinyl-Leu-Tyr-|-NHMec, and Leu-Tyr-Leu-|-Tyr-Trp, in which cleavage of the -Tyr-|-Leu- and -Tyr-|-Trp bonds also occurs).. Functionally, cleaves peptides in various proteins in a process that requires ATP hydrolysis. Has a chymotrypsin-like activity. Plays a major role in the degradation of misfolded proteins. This Synechococcus elongatus (strain ATCC 33912 / PCC 7942 / FACHB-805) (Anacystis nidulans R2) protein is ATP-dependent Clp protease proteolytic subunit 3.